A 401-amino-acid chain; its full sequence is MSSQSLHDCLRGRCLGVLRRMEIIGRFRYYFQHPWSRLLVSYLVTFFNFLIFAEDPVSHSQKEAHMSVVGNCFSFIISKYPAGFWSVLKVLLWVLAIICGLIAGKFIFHRRLFGRVLRLKMFREDHGSWMTMFFSTILSLFIFSHIYNLLLLMSVRMRPYMVTEYMGIRNESFMKMAAVGTWMGDFVTAWMVTDMMLQDTHYPDWGRTARHLWRQGHNRIVLFWTVLICLTSVVVLVISTDWIRWDNLNRGFLPSDEVSRAFLASFILVFDLLIVMQDWEFPHFMGDLDMNLPGLSTTQLKIRLPVCKRIFKEEYHIHITGKWFNYGIIFLVLILDLNMWKNQIFYKPYEYGQYVGPGEKIYTVEDPDTLQDFNRSMLTWEWRSTNIDPRTNQTFNQSNAI.

At 1–37 (MSSQSLHDCLRGRCLGVLRRMEIIGRFRYYFQHPWSR) the chain is on the cytoplasmic side. Residues 38–58 (LLVSYLVTFFNFLIFAEDPVS) traverse the membrane as a helical segment. The Extracellular segment spans residues 59–81 (HSQKEAHMSVVGNCFSFIISKYP). Residues 82 to 102 (AGFWSVLKVLLWVLAIICGLI) form a helical membrane-spanning segment. The Cytoplasmic segment spans residues 103–131 (AGKFIFHRRLFGRVLRLKMFREDHGSWMT). The chain crosses the membrane as a helical span at residues 132–152 (MFFSTILSLFIFSHIYNLLLL). The Extracellular segment spans residues 153–176 (MSVRMRPYMVTEYMGIRNESFMKM). Asn170 is a glycosylation site (N-linked (GlcNAc...) asparagine). The helical transmembrane segment at 177 to 197 (AAVGTWMGDFVTAWMVTDMML) threads the bilayer. At 198–219 (QDTHYPDWGRTARHLWRQGHNR) the chain is on the cytoplasmic side. Residues 220-240 (IVLFWTVLICLTSVVVLVIST) form a helical membrane-spanning segment. Topologically, residues 241-260 (DWIRWDNLNRGFLPSDEVSR) are extracellular. Residues 261-281 (AFLASFILVFDLLIVMQDWEF) form a helical membrane-spanning segment. The Cytoplasmic portion of the chain corresponds to 282-316 (PHFMGDLDMNLPGLSTTQLKIRLPVCKRIFKEEYH). The chain crosses the membrane as a helical span at residues 317-337 (IHITGKWFNYGIIFLVLILDL). Residues 338 to 401 (NMWKNQIFYK…NQTFNQSNAI (64 aa)) lie on the Extracellular side of the membrane. N-linked (GlcNAc...) asparagine glycosylation is found at Asn374, Asn392, and Asn396.

This sequence belongs to the TMEM117 family.

The protein resides in the cell membrane. May be involved in endoplasmic reticulum (ER) stress-induced cell death pathway. This is Transmembrane protein 117 (tmem117) from Danio rerio (Zebrafish).